Reading from the N-terminus, the 429-residue chain is UDP-N-acetylglucosamine 1-carboxyvinyltransferase (429 aa).

Residue 22–23 (KN) participates in phosphoenolpyruvate binding. Arg-102 contributes to the UDP-N-acetyl-alpha-D-glucosamine binding site. Cys-126 (proton donor) is an active-site residue. Cys-126 carries the 2-(S-cysteinyl)pyruvic acid O-phosphothioketal modification. UDP-N-acetyl-alpha-D-glucosamine-binding positions include 131-135 (RPVDL), Asp-316, and Ile-338.

Belongs to the EPSP synthase family. MurA subfamily.

It is found in the cytoplasm. The catalysed reaction is phosphoenolpyruvate + UDP-N-acetyl-alpha-D-glucosamine = UDP-N-acetyl-3-O-(1-carboxyvinyl)-alpha-D-glucosamine + phosphate. It participates in cell wall biogenesis; peptidoglycan biosynthesis. Its function is as follows. Cell wall formation. Adds enolpyruvyl to UDP-N-acetylglucosamine. This Rhodopseudomonas palustris (strain HaA2) protein is UDP-N-acetylglucosamine 1-carboxyvinyltransferase.